Here is a 502-residue protein sequence, read N- to C-terminus: ATP-dependent DNA helicase uvsW (502 aa).

The Helicase ATP-binding domain occupies 122–280; the sequence is VFEGLVNRRR…QYVGMFGEIF (159 aa). 135–142 contacts ATP; that stretch reads LPTSAGKS. Residues 232 to 235 carry the DEAH box motif; that stretch reads DECH. The Helicase C-terminal domain maps to 335-501; it reads WIAKLAIKLA…KFNYVMKTVN (167 aa).

As to quaternary structure, probably interacts with UvsW.1. Interacts with gp32. Requires Mg(2+) as cofactor.

It carries out the reaction Couples ATP hydrolysis with the unwinding of duplex DNA by translocating in the 3'-5' direction.. The catalysed reaction is ATP + H2O = ADP + phosphate + H(+). With respect to regulation, unwinding activity is strongly stimulated by single-stranded binding protein gp32, the ssDNA annealing activity is partially inhibited by gp32 and strongly inhibited by ATP-gamma-S. Another study did not find gp32 stimulation of helicase activity. Holliday junction (HJ) branch migration is inhibited by ATP-gamma-S. Plays important roles in recombination-dependent DNA repair and the reorganization of stalled replication forks during viral DNA synthesis. Active on in vivo-derived T4 DNA; viral DNA is highly modified by hydroxymethylation and glucosylation of cytosine residues. Helps process Holliday junction (HJ) intermediates to mature products by catalyzing branch migration. Probably able to catalyze replication fork regression. Unwinds HJ and Y-branched but not linear double-stranded (ds)DNA; unwinding requires ATP and Mg(2+). Unwinds dsDNA with a 3'-single-stranded (ss)DNA overhang, suggesting it is a 3'-5' helicase. Another study does not find this activity. Unwinds D- and R-loops. Also anneals ssDNA; ATP stimulates annealing. Has ssDNA and dsDNA-stimulated ATPase activity, also hydrolyzes GTP in the presence of DNA. This chain is ATP-dependent DNA helicase uvsW, found in Enterobacteria phage T4 (Bacteriophage T4).